Here is a 93-residue protein sequence, read N- to C-terminus: Large ribosomal subunit protein bL27 (93 aa).

Residues 1–22 are disordered; the sequence is MAHKKAGGSSRNGRDSAGRRLG.

This sequence belongs to the bacterial ribosomal protein bL27 family.

This chain is Large ribosomal subunit protein bL27, found in Parvibaculum lavamentivorans (strain DS-1 / DSM 13023 / NCIMB 13966).